The sequence spans 504 residues: Procardosin-A (504 aa).

The signal sequence occupies residues 1–24 (MGTSIKANVLALFLFYLLSPTVFS). A propeptide spanning residues 25-68 (VSDDGLIRIGLKKRKVDRIDQLRGRRALMEGNARKDFGFRGTVR) is cleaved from the precursor. A Peptidase A1 domain is found at 85–501 (YFGEIGIGTP…DYGNLLVGFA (417 aa)). Asp103 is a catalytic residue. A disulfide bridge links Cys116 with Cys122. Asn139 carries an N-linked (GlcNAc...) asparagine glycan. An RGD motif motif is present at residues 246-248 (RGD). An intrachain disulfide couples Cys277 to Cys281. Residue Asp286 is part of the active site. The propeptide at 310-414 (GVMNQQCKTV…YANELCEHLS (105 aa)) is plant-specific insert. The region spanning 311–416 (VMNQQCKTVV…NELCEHLSTS (106 aa)) is the Saposin B-type domain. 4 cysteine pairs are disulfide-bonded: Cys316-Cys410, Cys341-Cys382, Cys347-Cys379, and Cys424-Cys461. Asn432 is a glycosylation site (N-linked (GlcNAc...) asparagine). The short motif at 455–457 (KGE) is the KGE motif element.

This sequence belongs to the peptidase A1 family. Heterodimer of a light chain and a heavy chain. An intermediate form (35 kDa and 30 kDa subunits) is produced first, and undergoes proteolytic processing to remove the internal plant-specific insert (PSI) and the propeptide. There is some heterogeniety at the cleavage site. Interacts (via RGD or KGE motifs) with PLD1 (via C2 domain). Post-translationally, N-glycosylated. Glycans found at Asn-139 include approximately 6% oligomannose, 82% oligosaccharides of the plant modified type with proximal fucose but without xylose and 6% oligosaccharides of the plant modified type with proximal fucose and xylose. Glycans found at Asn-432 include 14% oligosaccharides of the plant modified type with proximal fucose but without xylose and 86% oligosaccharides of the plant modified type with proximal fucose and xylose. Detected only in pistils, not in seeds, roots, midribs, bracts, stamens, pollen, vascular or supporting tissues. Detected in seeds. High amounts are detected in the broad outer region of the upper portion of the stigma, towards the lower portion of the stigma it accumulates at the periphery. Within the stigma, expressed mainly in the epidermic papillae, lower levels are found in the cortical parenchyma. Present mainly in epidermal cells within the stye (at protein level). Expressed in young flower buds, and at lower levels in seeds, pollen and bracteas, but not in roots or leaves.

It localises to the microsome membrane. The protein localises to the protein storage vacuole. It is found in the secreted. Its subcellular location is the cell wall. The protein resides in the extracellular space. It localises to the extracellular matrix. Its activity is regulated as follows. Inhibited by the specific aspartic proteinase inhibitors diazoacetyl-noleucine methyl ester and pepstatin. In terms of biological role, aspartic proteinase with a high preference for bonds between hydrophobic residues. Cleaves alpha-lactalbumin but not beta-lactoglobulin. This chain is Procardosin-A, found in Cynara cardunculus (Cardoon).